A 1096-amino-acid chain; its full sequence is Inactive phospholipase C-like protein 1 (1096 aa).

A disordered region spans residues 1–101 (MAEGAASREA…KKTVSFSSMP (101 aa)). The residue at position 48 (Ser48) is a Phosphoserine. Over residues 49–60 (GVALPGAAGVPA) the composition is skewed to low complexity. Ser78 is modified (phosphoserine). The interaction with PPP1C stretch occupies residues 83–222 (PSNQKCGGRK…NIWVSGLRYL (140 aa)). At Thr94 the chain carries Phosphothreonine. Thr94 is subject to Phosphothreonine; by PKA. Ser96 is modified (phosphoserine; by PKA). A PH domain is found at 114–224 (SFMQAGCELK…WVSGLRYLVS (111 aa)). In terms of domain architecture, PI-PLC X-box spans 399 to 543 (QDMTQPLSHY…LKNMIIVKGK (145 aa)). The interval 544–568 (KLPSESDLLEGEVTDEDEEAEMSRR) is interaction with GABA A beta subunit. Over residues 550–563 (DLLEGEVTDEDEEA) the composition is skewed to acidic residues. Positions 550–569 (DLLEGEVTDEDEEAEMSRRM) are disordered. Residue Thr557 is modified to Phosphothreonine. At Ser570 the chain carries Phosphoserine. Residues 586 to 702 (LSDLVSICKS…GYVLRPSIMR (117 aa)) enclose the PI-PLC Y-box domain. The C2 domain occupies 702–831 (RDEVSYFSAN…PGYRHVPLRS (130 aa)). Residues 1040–1060 (DLLKNAKNEAVENIKQIQLAC) adopt a coiled-coil conformation. The tract at residues 1067–1096 (KGPGGGSEAKGKRSLEAIEEKESSEENGKL) is disordered. Residues 1075–1096 (AKGKRSLEAIEEKESSEENGKL) show a composition bias toward basic and acidic residues. Ser1080 carries the post-translational modification Phosphoserine.

In terms of assembly, interacts with PPP2CA, Ins(1,4,5)P3, Ins(1,4,5,6)P4 GABARAP, GABA receptor beta subunits, GABA receptor gamma-2 subunits and PPP1C. May form a ternary complex with GABA receptor beta subunit and GABARAP. The formation of a ternary complex with GABA receptor beta subunit and GABARAP could be the key step for facilitating the association of GABARAP with the GABA receptor gamma-2 subunit and to allow it to be transported at the right destination. Post-translationally, phosphorylated by the catalytic subunit of PKA. Phosphorylation of Thr-94 resulted in dissociation of PPP1C from PRIP1.

It is found in the cytoplasm. Its function is as follows. Involved in an inositol phospholipid-based intracellular signaling cascade. Shows no PLC activity to phosphatidylinositol 4,5-bisphosphate and phosphatidylinositol. Component in the phospho-dependent endocytosis process of GABA A receptor. Acts as an inhibitor of PPP1C. Involved in the assembly and/or the trafficking of gamma-2 subunit-containing GABA A receptors. This Mus musculus (Mouse) protein is Inactive phospholipase C-like protein 1 (Plcl1).